A 154-amino-acid polypeptide reads, in one-letter code: Myoglobin (154 aa).

One can recognise a Globin domain in the interval 2–148 (GLSDGEWQLV…FRKDIAAKYK (147 aa)). S4 bears the Phosphoserine mark. H65 is a binding site for nitrite. H65 serves as a coordination point for O2. A Phosphothreonine modification is found at T68. H94 serves as a coordination point for heme b.

Belongs to the globin family. In terms of assembly, monomeric.

The protein localises to the cytoplasm. It is found in the sarcoplasm. The catalysed reaction is Fe(III)-heme b-[protein] + nitric oxide + H2O = Fe(II)-heme b-[protein] + nitrite + 2 H(+). It carries out the reaction H2O2 + AH2 = A + 2 H2O. Monomeric heme protein which primary function is to store oxygen and facilitate its diffusion within muscle tissues. Reversibly binds oxygen through a pentacoordinated heme iron and enables its timely and efficient release as needed during periods of heightened demand. Depending on the oxidative conditions of tissues and cells, and in addition to its ability to bind oxygen, it also has a nitrite reductase activity whereby it regulates the production of bioactive nitric oxide. Under stress conditions, like hypoxia and anoxia, it also protects cells against reactive oxygen species thanks to its pseudoperoxidase activity. In Orcinus orca (Killer whale), this protein is Myoglobin (MB).